A 1162-amino-acid polypeptide reads, in one-letter code: Glycerophosphocholine phosphodiesterase GDE1 (1162 aa).

Positions 1-155 (MKFGKTYVTH…TSILSQHSGV (155 aa)) constitute an SPX domain. 6 ANK repeats span residues 346 to 375 (YHRTPLHYASQYGLVEVTRYLVEFGVKWGL), 392 to 421 (EGLTPLHLSIIGKHPKTTETLLGFNKAQTL), 423 to 452 (CPNLLLLAVRLNSPQILNSLIVEGNIDVNY), 458 to 487 (RNETALYIASKLNHPDLVEFLLESNANTEI), 492 to 521 (FGWTPIFIAASEGFMTIVKLLKEYGASYDI), and 525 to 554 (SGWLPMEHACLRGHLDVTDLLLPKNEKLLL). One can recognise a GP-PDE domain in the interval 817 to 1146 (TRVIGHRGLG…DSVLAVREGL (330 aa)).

This sequence belongs to the GDE1 family.

The protein localises to the cytoplasm. The catalysed reaction is sn-glycerol 3-phosphocholine + H2O = sn-glycerol 3-phosphate + choline + H(+). In terms of biological role, glycerophosphocholine glycerophosphodiesterase responsible for the hydrolysis of intracellular glycerophosphocholine into glycerol-phosphate and choline. The choline is used for phosphatidyl-choline synthesis. Required for utilization of glycerophosphocholine as phosphate source. C.albicans can utilize GroPCho through transport and intracellular hydrolysis or through extracellular hydrolysis. This Candida albicans (strain SC5314 / ATCC MYA-2876) (Yeast) protein is Glycerophosphocholine phosphodiesterase GDE1.